The chain runs to 499 residues: Cytochrome P450 71A9 (499 aa).

Residues 2-22 traverse the membrane as a helical segment; that stretch reads ISFTVFVFLTLLFTLSLVKQL. Cys440 is a binding site for heme.

Belongs to the cytochrome P450 family. Heme serves as cofactor.

It is found in the membrane. In Glycine max (Soybean), this protein is Cytochrome P450 71A9 (CYP71A9).